Here is a 57-residue protein sequence, read N- to C-terminus: Ribulose bisphosphate carboxylase large chain (57 aa).

A propeptide spanning residues 1–2 (MS) is cleaved from the precursor. Proline 3 is subject to N-acetylproline. An N6,N6,N6-trimethyllysine modification is found at lysine 14.

It belongs to the RuBisCO large chain family. Type I subfamily. In terms of assembly, heterohexadecamer of 8 large chains and 8 small chains.

It is found in the plastid. Its subcellular location is the chloroplast. The enzyme catalyses 2 (2R)-3-phosphoglycerate + 2 H(+) = D-ribulose 1,5-bisphosphate + CO2 + H2O. It carries out the reaction D-ribulose 1,5-bisphosphate + O2 = 2-phosphoglycolate + (2R)-3-phosphoglycerate + 2 H(+). Its function is as follows. RuBisCO catalyzes two reactions: the carboxylation of D-ribulose 1,5-bisphosphate, the primary event in carbon dioxide fixation, as well as the oxidative fragmentation of the pentose substrate in the photorespiration process. Both reactions occur simultaneously and in competition at the same active site. This chain is Ribulose bisphosphate carboxylase large chain (rbcL), found in Buxus sempervirens (Common box).